Reading from the N-terminus, the 249-residue chain is Small ribosomal subunit protein uS3 (249 aa).

Residues 38–106 (IRDFLSKGLE…QVQLNILEVK (69 aa)) form the KH type-2 domain. Basic and acidic residues predominate over residues 218 to 233 (ARDDRGSRRGRNDRPR). The tract at residues 218–249 (ARDDRGSRRGRNDRPRRGGGRRRRAAEQKQEG) is disordered.

Belongs to the universal ribosomal protein uS3 family. Part of the 30S ribosomal subunit. Forms a tight complex with proteins S10 and S14.

Its function is as follows. Binds the lower part of the 30S subunit head. Binds mRNA in the 70S ribosome, positioning it for translation. This is Small ribosomal subunit protein uS3 from Corynebacterium kroppenstedtii (strain DSM 44385 / JCM 11950 / CIP 105744 / CCUG 35717).